The primary structure comprises 267 residues: MADS-box transcription factor 15 (267 aa).

In terms of domain architecture, MADS-box spans 1 to 61; the sequence is MGRGKVQLKR…GKLYEYATDS (61 aa). Positions 88-178 constitute a K-box domain; it reads EGNWCHEYRK…QKELVERQKN (91 aa). Positions 179–215 are disordered; sequence VRGQQQVGQWDQTQVQAQAQAQPQAQTSSSSSSMLRD. Residues 182 to 215 show a composition bias toward low complexity; the sequence is QQQVGQWDQTQVQAQAQAQPQAQTSSSSSSMLRD.

As to quaternary structure, may interact with the K-box of MADS1 and MADS6.

The protein localises to the nucleus. Its function is as follows. Probable transcription factor. This Oryza sativa subsp. japonica (Rice) protein is MADS-box transcription factor 15 (MADS15).